Here is a 122-residue protein sequence, read N- to C-terminus: uncharacterized protein (122 aa).

A run of 3 helical transmembrane segments spans residues 33-53 (ALGL…LTIP), 58-78 (VLGV…LLRW), and 97-117 (PGYL…LVVA).

To E.coli YidH.

The protein resides in the cell membrane. This is an uncharacterized protein from Mycobacterium tuberculosis (strain CDC 1551 / Oshkosh).